Consider the following 127-residue polypeptide: uncharacterized protein (127 aa).

An N-terminal signal peptide occupies residues 1–16 (MIKKIIFGIAILLSTS). C17 is lipidated: N-palmitoyl cysteine. C17 is lipidated: S-diacylglycerol cysteine. The stretch at 56 to 101 (EVREEIQKYRVAIVKINKKKRELYNRLSKEAQNFLAEQQKYKQKLS) forms a coiled coil. Positions 107–118 (VENDQKNNTADS) are enriched in polar residues. Residues 107–127 (VENDQKNNTADSNDNKSKDTK) form a disordered region.

Its subcellular location is the cell membrane. This is an uncharacterized protein from Rickettsia conorii (strain ATCC VR-613 / Malish 7).